A 442-amino-acid chain; its full sequence is tRNA-2-methylthio-N(6)-dimethylallyladenosine synthase (442 aa).

The MTTase N-terminal domain maps to 2–120 (KKVFIRTFGC…LPKMIVDKET (119 aa)). [4Fe-4S] cluster is bound by residues cysteine 11, cysteine 49, cysteine 83, cysteine 157, cysteine 161, and cysteine 164. The 233-residue stretch at 143–375 (RVEGGAAFVS…NEVIEAETAR (233 aa)) folds into the Radical SAM core domain. The TRAM domain occupies 378–441 (QTMIGTVQRC…TFSLRGKVVE (64 aa)).

Belongs to the methylthiotransferase family. MiaB subfamily. In terms of assembly, monomer. [4Fe-4S] cluster serves as cofactor.

The protein resides in the cytoplasm. It catalyses the reaction N(6)-dimethylallyladenosine(37) in tRNA + (sulfur carrier)-SH + AH2 + 2 S-adenosyl-L-methionine = 2-methylsulfanyl-N(6)-dimethylallyladenosine(37) in tRNA + (sulfur carrier)-H + 5'-deoxyadenosine + L-methionine + A + S-adenosyl-L-homocysteine + 2 H(+). Functionally, catalyzes the methylthiolation of N6-(dimethylallyl)adenosine (i(6)A), leading to the formation of 2-methylthio-N6-(dimethylallyl)adenosine (ms(2)i(6)A) at position 37 in tRNAs that read codons beginning with uridine. This is tRNA-2-methylthio-N(6)-dimethylallyladenosine synthase from Neisseria meningitidis serogroup C (strain 053442).